A 223-amino-acid polypeptide reads, in one-letter code: Urease accessory protein UreF (223 aa).

Belongs to the UreF family. UreD, UreF and UreG form a complex that acts as a GTP-hydrolysis-dependent molecular chaperone, activating the urease apoprotein by helping to assemble the nickel containing metallocenter of UreC. The UreE protein probably delivers the nickel.

It localises to the cytoplasm. Functionally, required for maturation of urease via the functional incorporation of the urease nickel metallocenter. In Pseudomonas paraeruginosa (strain DSM 24068 / PA7) (Pseudomonas aeruginosa (strain PA7)), this protein is Urease accessory protein UreF.